The following is a 1632-amino-acid chain: uncharacterized protein (1632 aa).

Residues 1-15 are compositionally biased toward polar residues; the sequence is MSNNKQTAAPAATSN. The tract at residues 1–23 is disordered; that stretch reads MSNNKQTAAPAATSNEKAENGAE. Over 1 to 63 the chain is Cytoplasmic; it reads MSNNKQTAAP…TKDAFKGKYR (63 aa). The helical transmembrane segment at 64 to 86 threads the bilayer; sequence VFYGNGLHTSIMFGAGTAALDLM. Residues 87-1632 lie on the Extracellular side of the membrane; sequence TPGSFLPPFP…ESDGEEMSGE (1546 aa). N-linked (GlcNAc...) asparagine; by host glycosylation is found at Asn-149 and Asn-274. The disordered stretch occupies residues 516-538; sequence ELSSQLGDTDTKKEQKEKRSKQG. N-linked (GlcNAc...) asparagine; by host glycosylation is found at Asn-654, Asn-719, and Asn-797. The interval 838–890 is disordered; the sequence is IKGTKKSDDGDSKTDGSGDMEDDFTSLAKMTNRKRKAGGKDGPSKKKKKDGAD. Basic and acidic residues-rich tracts occupy residues 842 to 853 and 875 to 890; these read KKSDDGDSKTDG and GGKD…DGAD. 6 N-linked (GlcNAc...) asparagine; by host glycosylation sites follow: Asn-1012, Asn-1031, Asn-1261, Asn-1339, Asn-1511, and Asn-1546. A disordered region spans residues 1603–1632; sequence PSAMDVDEDEDEDMDDESDDESDGEEMSGE. Acidic residues predominate over residues 1607–1632; it reads DVDEDEDEDMDDESDDESDGEEMSGE.

Its subcellular location is the host membrane. This is an uncharacterized protein from Ostreid herpesvirus 1 (isolate France) (OsHV-1).